Reading from the N-terminus, the 208-residue chain is Uracil phosphoribosyltransferase (208 aa).

Residues Arg78, Arg103, and 130 to 138 each bind 5-phospho-alpha-D-ribose 1-diphosphate; that span reads DPMFATGGT. Uracil contacts are provided by residues Ile193 and 198–200; that span reads GDA. Asp199 is a binding site for 5-phospho-alpha-D-ribose 1-diphosphate.

It belongs to the UPRTase family. The cofactor is Mg(2+).

The catalysed reaction is UMP + diphosphate = 5-phospho-alpha-D-ribose 1-diphosphate + uracil. Its pathway is pyrimidine metabolism; UMP biosynthesis via salvage pathway; UMP from uracil: step 1/1. With respect to regulation, allosterically activated by GTP. Functionally, catalyzes the conversion of uracil and 5-phospho-alpha-D-ribose 1-diphosphate (PRPP) to UMP and diphosphate. The polypeptide is Uracil phosphoribosyltransferase (Campylobacter jejuni (strain RM1221)).